The sequence spans 227 residues: Cytochrome c oxidase subunit 2 (227 aa).

The Mitochondrial intermembrane portion of the chain corresponds to 1 to 14 (MAHAAQVGLQDATS). The helical transmembrane segment at 15–45 (PIMEELVIFHDHALMIIFLICFLVLYALFLT) threads the bilayer. Over 46–59 (LTTKLTNTSISDAQ) the chain is Mitochondrial matrix. A helical transmembrane segment spans residues 60–87 (EMETIWTILPAIILILIALPSLRILYLT). Over 88 to 227 (DEINDPSFTI…IFEMGPVFTL (140 aa)) the chain is Mitochondrial intermembrane. Cu cation contacts are provided by His161, Cys196, Glu198, Cys200, His204, and Met207. Glu198 contacts Mg(2+).

This sequence belongs to the cytochrome c oxidase subunit 2 family. Component of the cytochrome c oxidase (complex IV, CIV), a multisubunit enzyme composed of 14 subunits. The complex is composed of a catalytic core of 3 subunits MT-CO1, MT-CO2 and MT-CO3, encoded in the mitochondrial DNA, and 11 supernumerary subunits COX4I, COX5A, COX5B, COX6A, COX6B, COX6C, COX7A, COX7B, COX7C, COX8 and NDUFA4, which are encoded in the nuclear genome. The complex exists as a monomer or a dimer and forms supercomplexes (SCs) in the inner mitochondrial membrane with NADH-ubiquinone oxidoreductase (complex I, CI) and ubiquinol-cytochrome c oxidoreductase (cytochrome b-c1 complex, complex III, CIII), resulting in different assemblies (supercomplex SCI(1)III(2)IV(1) and megacomplex MCI(2)III(2)IV(2)). Found in a complex with TMEM177, COA6, COX18, COX20, SCO1 and SCO2. Interacts with TMEM177 in a COX20-dependent manner. Interacts with COX20. Interacts with COX16. Requires Cu cation as cofactor.

The protein localises to the mitochondrion inner membrane. The catalysed reaction is 4 Fe(II)-[cytochrome c] + O2 + 8 H(+)(in) = 4 Fe(III)-[cytochrome c] + 2 H2O + 4 H(+)(out). In terms of biological role, component of the cytochrome c oxidase, the last enzyme in the mitochondrial electron transport chain which drives oxidative phosphorylation. The respiratory chain contains 3 multisubunit complexes succinate dehydrogenase (complex II, CII), ubiquinol-cytochrome c oxidoreductase (cytochrome b-c1 complex, complex III, CIII) and cytochrome c oxidase (complex IV, CIV), that cooperate to transfer electrons derived from NADH and succinate to molecular oxygen, creating an electrochemical gradient over the inner membrane that drives transmembrane transport and the ATP synthase. Cytochrome c oxidase is the component of the respiratory chain that catalyzes the reduction of oxygen to water. Electrons originating from reduced cytochrome c in the intermembrane space (IMS) are transferred via the dinuclear copper A center (CU(A)) of subunit 2 and heme A of subunit 1 to the active site in subunit 1, a binuclear center (BNC) formed by heme A3 and copper B (CU(B)). The BNC reduces molecular oxygen to 2 water molecules using 4 electrons from cytochrome c in the IMS and 4 protons from the mitochondrial matrix. The polypeptide is Cytochrome c oxidase subunit 2 (MT-CO2) (Pongo abelii (Sumatran orangutan)).